The primary structure comprises 377 residues: N-acetyldiaminopimelate deacetylase (377 aa).

Aspartate 70 is an active-site residue. Glutamate 129 serves as the catalytic Proton acceptor.

This sequence belongs to the peptidase M20A family. N-acetyldiaminopimelate deacetylase subfamily.

It carries out the reaction N-acetyl-(2S,6S)-2,6-diaminopimelate + H2O = (2S,6S)-2,6-diaminopimelate + acetate. Its pathway is amino-acid biosynthesis; L-lysine biosynthesis via DAP pathway; LL-2,6-diaminopimelate from (S)-tetrahydrodipicolinate (acetylase route): step 3/3. In terms of biological role, catalyzes the conversion of N-acetyl-diaminopimelate to diaminopimelate and acetate. This Geobacillus thermodenitrificans (strain NG80-2) protein is N-acetyldiaminopimelate deacetylase.